A 156-amino-acid chain; its full sequence is Cyclic pyranopterin monophosphate synthase (156 aa).

Substrate-binding positions include 73 to 75 and 110 to 111; these read LCH and ME. Residue Asp125 is part of the active site.

The protein belongs to the MoaC family. In terms of assembly, homohexamer; trimer of dimers.

It catalyses the reaction (8S)-3',8-cyclo-7,8-dihydroguanosine 5'-triphosphate = cyclic pyranopterin phosphate + diphosphate. Its pathway is cofactor biosynthesis; molybdopterin biosynthesis. Catalyzes the conversion of (8S)-3',8-cyclo-7,8-dihydroguanosine 5'-triphosphate to cyclic pyranopterin monophosphate (cPMP). This chain is Cyclic pyranopterin monophosphate synthase, found in Pseudomonas putida (strain GB-1).